Consider the following 87-residue polypeptide: Glutaredoxin (87 aa).

The Glutaredoxin domain occupies 1–87 (MFKVYGYDSN…GFDQLREYFK (87 aa)). An intrachain disulfide couples Cys14 to Cys17.

Belongs to the glutaredoxin family.

Serves as a reducing agent for the phage-induced ribonucleotide reductase, but not for the bacterial ones. This specificity may be the result of sequence differences around the redox-active disulfide bond. The oxidized form accepts electrons from bacterial glutathione and will, in turn, reduce other small disulfides. Can also be reduced by NADPH and by bacterial thioredoxin reductase. The protein is Glutaredoxin (NRDC) of Enterobacteria phage T4 (Bacteriophage T4).